Consider the following 73-residue polypeptide: Conotoxin Im14.3 (73 aa).

The signal sequence occupies residues 1-17; sequence MGVFRCCLAAALVVVCL. Positions 18–35 are excised as a propeptide; the sequence is SRMGGTEPLESNHEDERR. Residues 22–42 form a disordered region; the sequence is GTEPLESNHEDERRADDTSGD. Residues 27-38 are compositionally biased toward basic and acidic residues; it reads ESNHEDERRADD. The region spanning 44–73 is the ShKT domain; the sequence is CVDTNEDCVNWASTGQCEANPSYMRENCRK.

Post-translationally, contain 2 disulfide bonds. As to expression, expressed by the venom duct.

It is found in the secreted. In terms of biological role, probable neurotoxin. This is Conotoxin Im14.3 from Conus imperialis (Imperial cone).